Reading from the N-terminus, the 257-residue chain is Pyridoxine 5'-phosphate synthase (257 aa).

A 3-amino-2-oxopropyl phosphate-binding site is contributed by asparagine 6. A 1-deoxy-D-xylulose 5-phosphate-binding site is contributed by 8–9; the sequence is DH. A 3-amino-2-oxopropyl phosphate-binding site is contributed by arginine 17. The active-site Proton acceptor is the histidine 42. 2 residues coordinate 1-deoxy-D-xylulose 5-phosphate: arginine 44 and histidine 49. The active-site Proton acceptor is the glutamate 69. Threonine 99 contacts 1-deoxy-D-xylulose 5-phosphate. Catalysis depends on histidine 211, which acts as the Proton donor. 3-amino-2-oxopropyl phosphate-binding positions include glycine 212 and 233–234; that span reads GQ.

This sequence belongs to the PNP synthase family. As to quaternary structure, homooctamer; tetramer of dimers.

The protein resides in the cytoplasm. The catalysed reaction is 3-amino-2-oxopropyl phosphate + 1-deoxy-D-xylulose 5-phosphate = pyridoxine 5'-phosphate + phosphate + 2 H2O + H(+). It participates in cofactor biosynthesis; pyridoxine 5'-phosphate biosynthesis; pyridoxine 5'-phosphate from D-erythrose 4-phosphate: step 5/5. In terms of biological role, catalyzes the complicated ring closure reaction between the two acyclic compounds 1-deoxy-D-xylulose-5-phosphate (DXP) and 3-amino-2-oxopropyl phosphate (1-amino-acetone-3-phosphate or AAP) to form pyridoxine 5'-phosphate (PNP) and inorganic phosphate. This chain is Pyridoxine 5'-phosphate synthase, found in Campylobacter hominis (strain ATCC BAA-381 / DSM 21671 / CCUG 45161 / LMG 19568 / NCTC 13146 / CH001A).